The following is a 353-amino-acid chain: Probable D-xylulose reductase A (353 aa).

Zn(2+)-binding residues include Cys-42, His-67, and Glu-68. 177-182 contacts NAD(+); it reads GAGPVG.

This sequence belongs to the zinc-containing alcohol dehydrogenase family. Zn(2+) is required as a cofactor.

It catalyses the reaction xylitol + NAD(+) = D-xylulose + NADH + H(+). The protein operates within carbohydrate degradation; L-arabinose degradation via L-arabinitol; D-xylulose 5-phosphate from L-arabinose (fungal route): step 4/5. Xylitol dehydrogenase which catalyzes the conversion of xylitol to D-xylulose. Xylose is a major component of hemicelluloses such as xylan. Most fungi utilize D-xylose via three enzymatic reactions, xylose reductase (XR), xylitol dehydrogenase (XDH), and xylulokinase, to form xylulose 5-phosphate, which enters pentose phosphate pathway. This is Probable D-xylulose reductase A (xdhA) from Aspergillus terreus (strain NIH 2624 / FGSC A1156).